Here is a 403-residue protein sequence, read N- to C-terminus: F-box only protein 22 (403 aa).

At Met-1 the chain carries N-acetylmethionine. Residues 21–67 (FVLSNLAEVVERVLTFLPAKALLRVACVCRLWRECVRRVLRTHRSVT) enclose the F-box domain. Thr-127 is subject to Phosphothreonine. Position 128 is a phosphoserine (Ser-128). Lys-194 carries the post-translational modification N6-acetyllysine.

In terms of assembly, directly interacts with SKP1 and CUL1. Interacts (via C-terminal) with KDM4A. Interacts with TP53. Interacts with MTOR; this interaction promotes 'lys-27'-linked ubiquitination of MTOR. (Microbial infection) Interacts with SARS_COV-2 protein NSP5; this interaction attenuates NSP5-mediated inhibition of innate immunity. In terms of processing, phosphorylated by EIF2AK4 at Thr-127 causes cytoplasmic retention of FBXO22. In terms of tissue distribution, predominantly expressed in liver, also enriched in cardiac muscle.

The protein localises to the cytoplasm. It localises to the nucleus. Its subcellular location is the myofibril. It is found in the sarcomere. The protein resides in the z line. Substrate-recognition component of the SCF (SKP1-CUL1-F-box protein)-type E3 ubiquitin ligase complex that is implicated in the control of various cellular processes such as cell cycle control, transcriptional regulation, DNA damage repair, and apoptosis. Promotes the proteasome-dependent degradation of key sarcomeric proteins, such as alpha-actinin (ACTN2) and filamin-C (FLNC), essential for maintenance of normal contractile function. Acts as a key regulator of histone methylation marks namely H3K9 and H3K36 methylation through the regulation of histone demethylase KDM4A protein levels. In complex with KDM4A, also regulates the abundance of TP53 by targeting methylated TP53 for degradation at the late senescent stage. Under oxidative stress, promotes the ubiquitination and degradation of BACH1. Mechanistically, reactive oxygen species (ROS) covalently modify cysteine residues on the bZIP domain of BACH1, leading to its release from chromatin and making it accessible to FBXO22. Upon amino acid depletion, mediates 'Lys-27'-linked ubiquitination of MTOR and thereby inhibits substrate recruitment to mTORC1. Also inhibits SARS-CoV-2 replication by inducing NSP5 degradation. The polypeptide is F-box only protein 22 (FBXO22) (Homo sapiens (Human)).